A 289-amino-acid chain; its full sequence is 4-diphosphocytidyl-2-C-methyl-D-erythritol kinase (289 aa).

Lys-11 is a catalytic residue. 93 to 103 (PLAAGLAGGSA) serves as a coordination point for ATP. Asp-135 is an active-site residue.

Belongs to the GHMP kinase family. IspE subfamily.

The catalysed reaction is 4-CDP-2-C-methyl-D-erythritol + ATP = 4-CDP-2-C-methyl-D-erythritol 2-phosphate + ADP + H(+). It participates in isoprenoid biosynthesis; isopentenyl diphosphate biosynthesis via DXP pathway; isopentenyl diphosphate from 1-deoxy-D-xylulose 5-phosphate: step 3/6. Its function is as follows. Catalyzes the phosphorylation of the position 2 hydroxy group of 4-diphosphocytidyl-2C-methyl-D-erythritol. In Thermoanaerobacter sp. (strain X514), this protein is 4-diphosphocytidyl-2-C-methyl-D-erythritol kinase.